Consider the following 293-residue polypeptide: Protease HtpX (293 aa).

Transmembrane regions (helical) follow at residues 2 to 22 (FRILLFLATNIAVVLVASVTL) and 38 to 58 (LTSLLIFCAVFGMSGAMISLF). His145 lines the Zn(2+) pocket. Glu146 is an active-site residue. Zn(2+) is bound at residue His149. The next 2 helical transmembrane spans lie at 156–176 (VTLALIQGVINTFVMFFARII) and 193–213 (IGFFITTIFAEIVLGILASII). A Zn(2+)-binding site is contributed by Glu222.

The protein belongs to the peptidase M48B family. The cofactor is Zn(2+).

The protein resides in the cell inner membrane. This Hahella chejuensis (strain KCTC 2396) protein is Protease HtpX.